The chain runs to 357 residues: UDP-N-acetylglucosamine--N-acetylmuramyl-(pentapeptide) pyrophosphoryl-undecaprenol N-acetylglucosamine transferase (357 aa).

UDP-N-acetyl-alpha-D-glucosamine contacts are provided by residues 14–16 (TGG), Asn-128, Arg-169, Ser-193, Ile-248, and Gln-292.

This sequence belongs to the glycosyltransferase 28 family. MurG subfamily.

It is found in the cell inner membrane. It carries out the reaction di-trans,octa-cis-undecaprenyl diphospho-N-acetyl-alpha-D-muramoyl-L-alanyl-D-glutamyl-meso-2,6-diaminopimeloyl-D-alanyl-D-alanine + UDP-N-acetyl-alpha-D-glucosamine = di-trans,octa-cis-undecaprenyl diphospho-[N-acetyl-alpha-D-glucosaminyl-(1-&gt;4)]-N-acetyl-alpha-D-muramoyl-L-alanyl-D-glutamyl-meso-2,6-diaminopimeloyl-D-alanyl-D-alanine + UDP + H(+). It functions in the pathway cell wall biogenesis; peptidoglycan biosynthesis. Its function is as follows. Cell wall formation. Catalyzes the transfer of a GlcNAc subunit on undecaprenyl-pyrophosphoryl-MurNAc-pentapeptide (lipid intermediate I) to form undecaprenyl-pyrophosphoryl-MurNAc-(pentapeptide)GlcNAc (lipid intermediate II). This chain is UDP-N-acetylglucosamine--N-acetylmuramyl-(pentapeptide) pyrophosphoryl-undecaprenol N-acetylglucosamine transferase, found in Bdellovibrio bacteriovorus (strain ATCC 15356 / DSM 50701 / NCIMB 9529 / HD100).